A 162-amino-acid chain; its full sequence is uncharacterized protein (162 aa).

Positions 129–161 (DLNAVLKNLKEVEKKSLKISKEELKKKLDQILG) form a coiled coil.

This is an uncharacterized protein from Aquifex aeolicus (strain VF5).